The following is a 185-amino-acid chain: MLQAIYNETKDLMQKSIQALNRDFSTLRSAKVSVNILDHIKVDYYGTPTALNQVGSVMSLDATTLQISPWEKNLLKEIERSIQEANIGVNPNNDGETIKLFFPPMTSEQRKLIAKDAKAMGEKAKVAVRNIRQDANNQVKKLEKDKEISEDESKKAQEQIQKITDEAIKKIDESVKNKEDAILKV.

A disordered region spans residues 137-158; that stretch reads NQVKKLEKDKEISEDESKKAQE. The segment covering 140 to 158 has biased composition (basic and acidic residues); the sequence is KKLEKDKEISEDESKKAQE.

Belongs to the RRF family.

Its subcellular location is the cytoplasm. Responsible for the release of ribosomes from messenger RNA at the termination of protein biosynthesis. May increase the efficiency of translation by recycling ribosomes from one round of translation to another. The protein is Ribosome-recycling factor of Helicobacter pylori (strain P12).